The chain runs to 201 residues: Small ribosomal subunit protein uS2 (201 aa).

This sequence belongs to the universal ribosomal protein uS2 family.

This Nanoarchaeum equitans (strain Kin4-M) protein is Small ribosomal subunit protein uS2.